A 461-amino-acid polypeptide reads, in one-letter code: Glucan endo-1,3-beta-glucosidase (461 aa).

The first 23 residues, 1–23, serve as a signal peptide directing secretion; the sequence is MPLLILLMLLAAGAAGAESATPS. Residue Glu-123 is the Proton donor of the active site. Catalysis depends on Glu-265, which acts as the Nucleophile. A disordered region spans residues 350–375; sequence GASVAPTPSPNPSPNPSPKPAPSGGG. Positions 356–370 are enriched in pro residues; that stretch reads TPSPNPSPNPSPKPA. Cys-378 and Cys-439 are oxidised to a cystine.

Belongs to the glycosyl hydrolase 17 family. Contains two additional disulfide bonds.

The catalysed reaction is Hydrolysis of (1-&gt;3)-beta-D-glucosidic linkages in (1-&gt;3)-beta-D-glucans.. Functionally, is thought to be an important plant defense-related product against fungal pathogens. In Triticum aestivum (Wheat), this protein is Glucan endo-1,3-beta-glucosidase (GLC1).